The sequence spans 570 residues: Polypeptide N-acetylgalactosaminyltransferase 2 (570 aa).

The Cytoplasmic segment spans residues 1-6 (MRRRSR). The chain crosses the membrane as a helical; Signal-anchor for type II membrane protein span at residues 7 to 24 (MLLCFALLWVLGIAYYMY). At 25-570 (SGGGSALAAG…QWKFSLNLQQ (546 aa)) the chain is on the lumenal side. Serine 29 is a glycosylation site (O-linked (Xyl...) (chondroitin sulfate) serine). 4 cysteine pairs are disulfide-bonded: cysteine 125–cysteine 353, cysteine 344–cysteine 422, cysteine 455–cysteine 472, and cysteine 495–cysteine 512. The interval 134 to 239 (LPATSVVITF…ERWLEPLLER (106 aa)) is catalytic subdomain A. 3 residues coordinate substrate: threonine 142, aspartate 175, and arginine 200. Aspartate 223 serves as a coordination point for Mn(2+). Serine 224 contacts substrate. Histidine 225 is a binding site for Mn(2+). The interval 299-361 (PIKTPMIAGG…PCSRVGHVFR (63 aa)) is catalytic subdomain B. A substrate-binding site is contributed by tryptophan 330. Histidine 358 serves as a coordination point for Mn(2+). Residues arginine 361, histidine 364, and tyrosine 366 each contribute to the substrate site. A Ricin B-type lectin domain is found at 442-565 (QDIAFGALQQ…PALSQQWKFS (124 aa)). Asparagine 515 carries an N-linked (GlcNAc...) asparagine glycan. Serine 535 carries the phosphoserine modification. Cysteine 538 and cysteine 554 form a disulfide bridge.

Belongs to the glycosyltransferase 2 family. GalNAc-T subfamily. The cofactor is Mn(2+). Widely expressed at high level.

It is found in the golgi apparatus. It localises to the golgi stack membrane. Its subcellular location is the secreted. The catalysed reaction is L-seryl-[protein] + UDP-N-acetyl-alpha-D-galactosamine = a 3-O-[N-acetyl-alpha-D-galactosaminyl]-L-seryl-[protein] + UDP + H(+). It catalyses the reaction L-threonyl-[protein] + UDP-N-acetyl-alpha-D-galactosamine = a 3-O-[N-acetyl-alpha-D-galactosaminyl]-L-threonyl-[protein] + UDP + H(+). It participates in protein modification; protein glycosylation. Functionally, catalyzes the initial reaction in O-linked oligosaccharide biosynthesis, the transfer of an N-acetyl-D-galactosamine residue to a serine or threonine residue on the protein receptor. Has a broad spectrum of substrates for peptides such as EA2, Muc5AC, Muc1a, Muc1b. Probably involved in O-linked glycosylation of the immunoglobulin A1 (IgA1) hinge region. Involved in O-linked glycosylation of APOC-III, ANGPTL3 and PLTP. It participates in the regulation of HDL-C metabolism. This chain is Polypeptide N-acetylgalactosaminyltransferase 2 (Galnt2), found in Mus musculus (Mouse).